Consider the following 394-residue polypeptide: Elongation factor Tu (394 aa).

A tr-type G domain is found at 10-204; that stretch reads KPHVNVGTIG…AMDDYIPAPE (195 aa). The G1 stretch occupies residues 19–26; sequence GHVDHGKT. Position 19-26 (19-26) interacts with GTP; sequence GHVDHGKT. Thr26 is a Mg(2+) binding site. The segment at 60–64 is G2; sequence GITIN. The G3 stretch occupies residues 81-84; that stretch reads DCPG. GTP-binding positions include 81-85 and 136-139; these read DCPGH and NKCD. The tract at residues 136-139 is G4; that stretch reads NKCD. The tract at residues 174–176 is G5; it reads SAL.

It belongs to the TRAFAC class translation factor GTPase superfamily. Classic translation factor GTPase family. EF-Tu/EF-1A subfamily. In terms of assembly, monomer.

It is found in the cytoplasm. The enzyme catalyses GTP + H2O = GDP + phosphate + H(+). Its function is as follows. GTP hydrolase that promotes the GTP-dependent binding of aminoacyl-tRNA to the A-site of ribosomes during protein biosynthesis. This chain is Elongation factor Tu, found in Francisella tularensis subsp. holarctica (strain FTNF002-00 / FTA).